We begin with the raw amino-acid sequence, 363 residues long: DNA replication and repair protein RecF (363 aa).

Position 33–40 (33–40 (GDNGQGKT)) interacts with ATP.

This sequence belongs to the RecF family.

The protein localises to the cytoplasm. Its function is as follows. The RecF protein is involved in DNA metabolism; it is required for DNA replication and normal SOS inducibility. RecF binds preferentially to single-stranded, linear DNA. It also seems to bind ATP. This Tropheryma whipplei (strain TW08/27) (Whipple's bacillus) protein is DNA replication and repair protein RecF.